Reading from the N-terminus, the 328-residue chain is Cytochrome c biogenesis protein CcsA (328 aa).

The next 8 membrane-spanning stretches (helical) occupy residues 13–33, 46–66, 73–93, 101–121, 146–166, 234–254, 263–283, and 295–315; these read ISFS…LVNL, GIVI…IYSG, LYES…VSYF, LNAI…SGLL, MILG…LLVI, IISL…VWAN, WDPK…YLHI, and AIVA…VNLL.

The protein belongs to the CcmF/CycK/Ccl1/NrfE/CcsA family. As to quaternary structure, may interact with Ccs1.

The protein resides in the plastid. The protein localises to the chloroplast thylakoid membrane. Required during biogenesis of c-type cytochromes (cytochrome c6 and cytochrome f) at the step of heme attachment. This Nasturtium officinale (Watercress) protein is Cytochrome c biogenesis protein CcsA.